The chain runs to 348 residues: Outer membrane protein A (348 aa).

Residues 1 to 21 (MKKTAIAIAVALAGFATVAQA) form the signal peptide. 8 consecutive transmembrane segments (beta stranded) span residues 27–37 (TWYTGAKLGWS), 55–66 (QLGAGAFGGYQV), 70–78 (VGFEMGYDW), 96–107 (QGVQLTAKLGYP), 112–120 (LDIYTRLGG), 146–155 (PVFAGGVEYA), 160–167 (IATRLEYQ), and 186–194 (LLSLGVSYR). Positions 201 to 210 (APVVAPAPAP) are hinge-like. Repeat copies occupy residues 205–206 (AP), 207–208 (AP), and 209–210 (AP). A 3 X 2 AA tandem repeats of A-P region spans residues 205–210 (APAPAP). Residues 212–340 (VQTKHFTLKS…RVEIEVKGIK (129 aa)) enclose the OmpA-like domain. Cysteines 313 and 325 form a disulfide.

It belongs to the outer membrane OOP (TC 1.B.6) superfamily. OmpA family. In terms of assembly, monomer and homodimer. (Microbial infection) Upon infection with phage Sf6 associates with the mature bacteriophage capsid. Was originally suggested to be within the bacteriophage capsid. This has been disproven.

Its subcellular location is the extracellular vesicle. It localises to the cell outer membrane. With TolR probably plays a role in maintaining the position of the peptidoglycan cell wall in the periplasm. Acts as a porin with low permeability that allows slow penetration of small solutes; an internal gate slows down solute passage. In terms of biological role, required for conjugation with F-type plasmids; probably serves as the mating receptor on recipient cells. Functionally, (Microbial infection) Serves as a secondary receptor during phage Sf6 infection; infection requires both lipopolysaccharide (LPS) and the OmpA beta-barrel. In Shigella flexneri, this protein is Outer membrane protein A.